Here is a 525-residue protein sequence, read N- to C-terminus: MAVPGEAEEEATVYLVVSGIPSVLRSAHLRSYFSQFREERGGGFLCFHYRHRPERAPPQAAPNSALIPTDPAAEGQLLSQTSATDVRPLSTRDSTPIQTRTCCCVISVRGLAQAQRLIRMYSGRRWLDSHGTWLPGRCLIRRLRLPTEASGLGSFPFKTRKELQSWKAENEAFTLADLKQLPELNPPVLMPRGNVGTPLRVFLELIRACRLPPRIITQLQLQFPKTGSSRRYGNVPFEYEDSETVEQEELVYTAEGEEIPQGTYLADIPASPCGEPEEEVGKEEEEESHSDEDDDRGEEWERHEALHEDVTGQERTTEQLFEEEIELKWEKGGSGLVFYTDAQFWQEEEGDFDEQTADDWDVDMSVYYDRDGGDKDARDSVQMRLEQRLRDGQEDGSVIERQVGTFERHTKGIGRKVMERQGWAEGQGLGCRCSGVPEALDSDGQHPRCKRGLGYHGEKLQPFGQLKRPRRNGLGLISTIYDEPLPQDQTESLLRRQPPTSMKFRTDMAFVRGSSCASDSPSLPD.

The interval 264-316 (YLADIPASPCGEPEEEVGKEEEEESHSDEDDDRGEEWERHEALHEDVTGQERT) is disordered. Positions 275–298 (EPEEEVGKEEEEESHSDEDDDRGE) are enriched in acidic residues. Over residues 299–316 (EWERHEALHEDVTGQERT) the composition is skewed to basic and acidic residues. Residues 410–458 (TKGIGRKVMERQGWAEGQGLGCRCSGVPEALDSDGQHPRCKRGLGYHGE) form the G-patch domain.

In terms of assembly, interacts with mitochondrial MAVS; the interaction is markedly increased upon viral infection. Expressed in ocular tissues including retinal pigment epithelium, cornea, ciliary muscle and non-pigmented ciliary epithelium. Also expressed in optic nerve, cartilage, skin and lymph node.

Its subcellular location is the nucleus. The protein resides in the cytoplasm. Involved in transcriptional regulation. It is able to activate transcription from the CXCR4 promoter and therefore it might control neural crest cell migration involved in ocular and craniofacial development. Is a negative regulator of immune antiviral response, acting via down-regulation of RIG-I-like receptors signaling and inhibition of type I interferon production. The control mechanism involves interaction with mitochondrial MAVS and inhibition of MAVS assembly with downstream proteins implicated in antiviral response, such as TBK1 and TRAF6. This is G patch domain-containing protein 3 (GPATCH3) from Homo sapiens (Human).